We begin with the raw amino-acid sequence, 267 residues long: Endonuclease NucS (267 aa).

This sequence belongs to the NucS endonuclease family.

The protein localises to the cytoplasm. Functionally, cleaves both 3' and 5' ssDNA extremities of branched DNA structures. The chain is Endonuclease NucS from Pyrococcus furiosus (strain ATCC 43587 / DSM 3638 / JCM 8422 / Vc1).